Here is a 177-residue protein sequence, read N- to C-terminus: Adenine phosphoribosyltransferase (177 aa).

Belongs to the purine/pyrimidine phosphoribosyltransferase family. Homodimer.

It is found in the cytoplasm. It carries out the reaction AMP + diphosphate = 5-phospho-alpha-D-ribose 1-diphosphate + adenine. The protein operates within purine metabolism; AMP biosynthesis via salvage pathway; AMP from adenine: step 1/1. In terms of biological role, catalyzes a salvage reaction resulting in the formation of AMP, that is energically less costly than de novo synthesis. This chain is Adenine phosphoribosyltransferase, found in Leptospira interrogans serogroup Icterohaemorrhagiae serovar copenhageni (strain Fiocruz L1-130).